The following is a 196-amino-acid chain: Chromophore lyase CpcT/CpeT (196 aa).

This sequence belongs to the CpcT/CpeT biliprotein lyase family.

In terms of biological role, covalently attaches a chromophore to Cys residue(s) of phycobiliproteins. This Synechococcus sp. (strain WH8020) protein is Chromophore lyase CpcT/CpeT.